The chain runs to 347 residues: Hydroxymethylglutaryl-CoA synthase (347 aa).

Positions 29 and 30 each coordinate (3S)-3-hydroxy-3-methylglutaryl-CoA. Residue Glu-80 is the Proton donor/acceptor of the active site. (3S)-3-hydroxy-3-methylglutaryl-CoA-binding residues include Cys-112 and Thr-153. Cys-112 serves as the catalytic Acyl-thioester intermediate. Arg-199 serves as a coordination point for CoA. (3S)-3-hydroxy-3-methylglutaryl-CoA is bound by residues Thr-201 and His-234. His-234 (proton donor/acceptor) is an active-site residue. Lys-239 lines the CoA pocket. Residues Arg-243, Asn-266, and Ser-296 each contribute to the (3S)-3-hydroxy-3-methylglutaryl-CoA site.

Belongs to the thiolase-like superfamily. Archaeal HMG-CoA synthase family. Interacts with acetoacetyl-CoA thiolase that catalyzes the precedent step in the pathway and with a DUF35 protein. The acetoacetyl-CoA thiolase/HMG-CoA synthase complex channels the intermediate via a fused CoA-binding site, which allows for efficient coupling of the endergonic thiolase reaction with the exergonic HMGCS reaction.

The catalysed reaction is acetoacetyl-CoA + acetyl-CoA + H2O = (3S)-3-hydroxy-3-methylglutaryl-CoA + CoA + H(+). The protein operates within metabolic intermediate biosynthesis; (R)-mevalonate biosynthesis; (R)-mevalonate from acetyl-CoA: step 2/3. Its function is as follows. Catalyzes the condensation of acetyl-CoA with acetoacetyl-CoA to form 3-hydroxy-3-methylglutaryl-CoA (HMG-CoA). Functions in the mevalonate (MVA) pathway leading to isopentenyl diphosphate (IPP), a key precursor for the biosynthesis of isoprenoid compounds that are building blocks of archaeal membrane lipids. The chain is Hydroxymethylglutaryl-CoA synthase from Methanocella arvoryzae (strain DSM 22066 / NBRC 105507 / MRE50).